Reading from the N-terminus, the 870-residue chain is Patatin-like phospholipase domain-containing protein NCU11180 (870 aa).

2 disordered regions span residues 1–24 (MADD…PPEA) and 131–158 (KVIK…KGVA). Positions 131–141 (KVIKTDRDEKR) are enriched in basic and acidic residues. Residues 142 to 155 (NKRGKDRKNKKPRK) are compositionally biased toward basic residues. The chain crosses the membrane as a helical span at residues 183–203 (WPFLLFVSFWIVGLGMAYLAT). The interval 281 to 320 (EEVERELESQSQNSDSGVASGEETSNTKAGGGNNGNDKKT) is disordered. Positions 289–308 (SQSQNSDSGVASGEETSNTK) are enriched in polar residues. The PNPLA domain maps to 399-590 (LCLSGGATFA…RTDIPIKSLN (192 aa)). The short motif at 430–434 (GTSGG) is the GXSXG element. Residue Ser-432 is the Nucleophile of the active site. Asp-577 functions as the Proton acceptor in the catalytic mechanism. 2 disordered regions span residues 735 to 786 (RRET…DRRG) and 804 to 870 (GREG…HSRT). Residues 818-834 (TEDELTMTELEGEDDDG) are compositionally biased toward acidic residues.

Belongs to the PLPL family.

It is found in the membrane. Functionally, probable lipid hydrolase. This is Patatin-like phospholipase domain-containing protein NCU11180 from Neurospora crassa (strain ATCC 24698 / 74-OR23-1A / CBS 708.71 / DSM 1257 / FGSC 987).